The primary structure comprises 164 residues: Lipocalin-like 1 protein (164 aa).

This sequence belongs to the calycin superfamily. Lipocalin family.

This chain is Lipocalin-like 1 protein (LCNL1), found in Homo sapiens (Human).